A 122-amino-acid chain; its full sequence is Large ribosomal subunit protein uL14 (122 aa).

This sequence belongs to the universal ribosomal protein uL14 family. In terms of assembly, part of the 50S ribosomal subunit. Forms a cluster with proteins L3 and L19. In the 70S ribosome, L14 and L19 interact and together make contacts with the 16S rRNA in bridges B5 and B8.

In terms of biological role, binds to 23S rRNA. Forms part of two intersubunit bridges in the 70S ribosome. The sequence is that of Large ribosomal subunit protein uL14 from Herminiimonas arsenicoxydans.